We begin with the raw amino-acid sequence, 100 residues long: MELNPTEKDKMLIFTAGLVAERRKARGLKLNYPEAVAFISAALLEGARDGMSVAELMHYGTTLLSKSDVMDGVAEMIAEVQVEATFPDGSKLVTVHQPIV.

The protein belongs to the urease gamma subunit family. As to quaternary structure, heterotrimer of UreA (gamma), UreB (beta) and UreC (alpha) subunits. Three heterotrimers associate to form the active enzyme.

It localises to the cytoplasm. The enzyme catalyses urea + 2 H2O + H(+) = hydrogencarbonate + 2 NH4(+). Its pathway is nitrogen metabolism; urea degradation; CO(2) and NH(3) from urea (urease route): step 1/1. In Acinetobacter baylyi (strain ATCC 33305 / BD413 / ADP1), this protein is Urease subunit gamma.